The following is a 751-amino-acid chain: Glutathione biosynthesis bifunctional protein GshAB (751 aa).

The segment at 1–336 (MELDAVGKAI…QADQLTRQVL (336 aa)) is glutamate--cysteine ligase.

The protein in the N-terminal section; belongs to the glutamate--cysteine ligase type 1 family. Type 2 subfamily. Monomer.

It carries out the reaction L-cysteine + L-glutamate + ATP = gamma-L-glutamyl-L-cysteine + ADP + phosphate + H(+). It catalyses the reaction gamma-L-glutamyl-L-cysteine + glycine + ATP = glutathione + ADP + phosphate + H(+). It functions in the pathway sulfur metabolism; glutathione biosynthesis; glutathione from L-cysteine and L-glutamate: step 1/2. The protein operates within sulfur metabolism; glutathione biosynthesis; glutathione from L-cysteine and L-glutamate: step 2/2. Functionally, synthesizes glutathione from L-glutamate and L-cysteine via gamma-L-glutamyl-L-cysteine. This chain is Glutathione biosynthesis bifunctional protein GshAB (gshAB), found in Lactiplantibacillus plantarum (strain ATCC BAA-793 / NCIMB 8826 / WCFS1) (Lactobacillus plantarum).